The primary structure comprises 256 residues: Lysine-rich coiled-coil protein 1 (256 aa).

Disordered stretches follow at residues 62–84 (RLPSGTNHSYPRSCSSSQTEDRV) and 144–256 (TIDP…ILGF). A compositionally biased stretch (polar residues) spans 64–79 (PSGTNHSYPRSCSSSQ). Composition is skewed to basic and acidic residues over residues 161-188 (HVEEGREKQEERPKHERKRSSEEMDLNK) and 218-227 (KTRDVSSKKE). Positions 209-247 (EKLKNRKEKKTRDVSSKKEDRKRRKEKKEQGEERTEEEM) form a coiled coil.

The chain is Lysine-rich coiled-coil protein 1 (Krcc1) from Mus musculus (Mouse).